The sequence spans 105 residues: Large ribosomal subunit protein P2 (105 aa).

Belongs to the eukaryotic ribosomal protein P1/P2 family. As to quaternary structure, P1 and P2 exist as dimers at the large ribosomal subunit. In terms of processing, phosphorylated.

Its function is as follows. Plays an important role in the elongation step of protein synthesis. In Leishmania braziliensis, this protein is Large ribosomal subunit protein P2 (LIP2).